A 314-amino-acid chain; its full sequence is UDP-3-O-acyl-N-acetylglucosamine deacetylase (314 aa).

Zn(2+) contacts are provided by H82, H239, and D243. H266 serves as the catalytic Proton donor.

Belongs to the LpxC family. Zn(2+) serves as cofactor.

It catalyses the reaction a UDP-3-O-[(3R)-3-hydroxyacyl]-N-acetyl-alpha-D-glucosamine + H2O = a UDP-3-O-[(3R)-3-hydroxyacyl]-alpha-D-glucosamine + acetate. Its pathway is glycolipid biosynthesis; lipid IV(A) biosynthesis; lipid IV(A) from (3R)-3-hydroxytetradecanoyl-[acyl-carrier-protein] and UDP-N-acetyl-alpha-D-glucosamine: step 2/6. Its function is as follows. Catalyzes the hydrolysis of UDP-3-O-myristoyl-N-acetylglucosamine to form UDP-3-O-myristoylglucosamine and acetate, the committed step in lipid A biosynthesis. The chain is UDP-3-O-acyl-N-acetylglucosamine deacetylase from Myxococcus xanthus (strain DK1622).